A 319-amino-acid chain; its full sequence is Ferrochelatase (319 aa).

Fe cation-binding residues include H193 and E274.

It belongs to the ferrochelatase family.

It is found in the cytoplasm. The enzyme catalyses heme b + 2 H(+) = protoporphyrin IX + Fe(2+). Its pathway is porphyrin-containing compound metabolism; protoheme biosynthesis; protoheme from protoporphyrin-IX: step 1/1. In terms of biological role, catalyzes the ferrous insertion into protoporphyrin IX. This chain is Ferrochelatase, found in Actinobacillus pleuropneumoniae serotype 7 (strain AP76).